The following is a 367-amino-acid chain: Di-N-acetylchitobiase (367 aa).

The first 23 residues, 1–23 (MALSDLLELTLLLLLPLLERLSA), serve as a signal peptide directing secretion. A GH18 domain is found at 24–367 (EDCPCSEASL…EMWGALRPRL (344 aa)). Glu128 (proton donor) is an active-site residue. N-linked (GlcNAc...) asparagine glycosylation is found at Asn178, Asn213, Asn247, and Asn284.

It belongs to the glycosyl hydrolase 18 family.

It is found in the lysosome. Involved in the degradation of asparagine-linked glycoproteins. Hydrolyze of N-acetyl-beta-D-glucosamine (1-4)N-acetylglucosamine chitobiose core from the reducing end of the bond, it requires prior cleavage by glycosylasparaginase. The protein is Di-N-acetylchitobiase (Ctbs) of Rattus norvegicus (Rat).